Reading from the N-terminus, the 293-residue chain is N-acetylneuraminate lyase (293 aa).

3 residues coordinate aceneuramate: S47, T48, and Y136. The active-site Proton donor is the Y136. The active-site Schiff-base intermediate with substrate is K164. T166, G188, D190, E191, S207, and Y251 together coordinate aceneuramate.

This sequence belongs to the DapA family. NanA subfamily. As to quaternary structure, homotetramer.

It is found in the cytoplasm. The catalysed reaction is aceneuramate = aldehydo-N-acetyl-D-mannosamine + pyruvate. It functions in the pathway amino-sugar metabolism; N-acetylneuraminate degradation; D-fructose 6-phosphate from N-acetylneuraminate: step 1/5. In terms of biological role, catalyzes the reversible aldol cleavage of N-acetylneuraminic acid (sialic acid; Neu5Ac) to form pyruvate and N-acetylmannosamine (ManNAc) via a Schiff base intermediate. This is N-acetylneuraminate lyase from Pasteurella multocida (strain Pm70).